Reading from the N-terminus, the 317-residue chain is MVLTQLRIASRRSQLAMVQTNWVQAELEQAHPGLSISVEAMATQGDKILDVALAKIGDKGLFTKELEAQMLVGRADIAVHSLKDLPTNLPEGLMLGCVTEREDPADALVVNQKNAEHQLDTLPEGAIVGTSSLRRLAQLRHHYPHLVFKDVRGNVITRLEKLDAGNYDCLILAAAGLTRLGFGDRIHQLIPSEISLHAVGQGALGIECVEGHPEVLEAIKALEHKPTAQRCLAERALLRELEGGCQVPIGVNSRIEANELLLTGMVASLDGKRLIRDQQRGPIDRCEAIGKELAETLKSQGAGEILAEIFAAVRPEA.

Residue Cys245 is modified to S-(dipyrrolylmethanemethyl)cysteine.

Belongs to the HMBS family. In terms of assembly, monomer. The cofactor is dipyrromethane.

The enzyme catalyses 4 porphobilinogen + H2O = hydroxymethylbilane + 4 NH4(+). The protein operates within porphyrin-containing compound metabolism; protoporphyrin-IX biosynthesis; coproporphyrinogen-III from 5-aminolevulinate: step 2/4. Its pathway is porphyrin-containing compound metabolism; chlorophyll biosynthesis. Tetrapolymerization of the monopyrrole PBG into the hydroxymethylbilane pre-uroporphyrinogen in several discrete steps. The chain is Porphobilinogen deaminase from Prochlorococcus marinus (strain MIT 9313).